We begin with the raw amino-acid sequence, 406 residues long: Probable transcription factor FPSE_09188 (406 aa).

The tract at residues 1–72 (MELPTYAVSQ…PKGSSSRCNG (72 aa)) is disordered. Residues 7–20 (AVSQSLLASRSVSS) are compositionally biased toward low complexity.

It belongs to the bZIP family.

The protein localises to the nucleus. The two putative transcription factors FPSE_09188 and FPSE_09189 could be responsible for orchestrating expression of the W493 A and B biosynthesis cluster genes. W493 A and B consist of six amino acid residues D-allo-thr, L-Ala, D-Ala, L-Gln, D-Tyr, and L-Val/L-Ile linked to a 3-hydroxy-4-methyltetradecanoic acid polyketide chain. The polypeptide is Probable transcription factor FPSE_09188 (Fusarium pseudograminearum (strain CS3096) (Wheat and barley crown-rot fungus)).